The chain runs to 638 residues: Threonine--tRNA ligase (638 aa).

The region spanning 1–61 (MPIITLPDGS…NSDSKVVIIT (61 aa)) is the TGS domain. The catalytic stretch occupies residues 242–533 (DHRKLGKKHS…LIEQYEAKFP (292 aa)). Residues Cys-333, His-384, and His-510 each coordinate Zn(2+).

Belongs to the class-II aminoacyl-tRNA synthetase family. As to quaternary structure, homodimer. Zn(2+) serves as cofactor.

Its subcellular location is the cytoplasm. It catalyses the reaction tRNA(Thr) + L-threonine + ATP = L-threonyl-tRNA(Thr) + AMP + diphosphate + H(+). Its function is as follows. Catalyzes the attachment of threonine to tRNA(Thr) in a two-step reaction: L-threonine is first activated by ATP to form Thr-AMP and then transferred to the acceptor end of tRNA(Thr). Also edits incorrectly charged L-seryl-tRNA(Thr). The chain is Threonine--tRNA ligase from Prochlorococcus marinus (strain MIT 9215).